The primary structure comprises 453 residues: GTPase Der (453 aa).

EngA-type G domains follow at residues 3–167 (PIIV…INSK) and 188–361 (VKIA…HTSQ). GTP is bound by residues 9–16 (GRTNVGKS), 57–61 (DTAGI), 119–122 (NKID), 194–201 (GKPNVGKS), 241–245 (DTAGM), and 306–309 (NKCD). A KH-like domain is found at 362–446 (KKIKTSQVMK…PIKIQFKETM (85 aa)).

Belongs to the TRAFAC class TrmE-Era-EngA-EngB-Septin-like GTPase superfamily. EngA (Der) GTPase family. Associates with the 50S ribosomal subunit.

Functionally, GTPase that plays an essential role in the late steps of ribosome biogenesis. The polypeptide is GTPase Der (Buchnera aphidicola subsp. Schizaphis graminum (strain Sg)).